Reading from the N-terminus, the 1311-residue chain is MPLIDKLRERISRAFYSHGLLCASYPIPIIILTALCILASCYPLLKLPLPGTGPVEYVTSVKDYSPPPLEPNPEDHSDQPDWYVGLPVAFIQQVLVKAVVSPWDKDFLAVDVFRSPLSRVFPLVEEIRNHVLRDKSQEKSLEDVCLQVTDLLPGLKKFRDKLPEHGCLLLSPANFWQNSQEQFSSDPDLIRTIHQHEPKTLQTSATLKDLLFGVPGKQSGVSLYNRKRIVSYTVTIALRRYNATFLDSLRSRLKRQHPSTNSSAASQHIVHVHFKEEIGIAELIPLVTTYIILFAYIYFSTRKIDLVKSKWGLALAAVVTVLSSLLMSVGLCTLFGLTPTLNGGEIFPYLVVVIGLENVLVLTKSVVSTPVDLEVKLRIAQGLRNESWFIMKNMATELGIILIGYFTLVPAIQEFCLFAVVGLVSDFFLQMFFFTTVLSIDIRRMELADLNKRIPAEACIPPPKPGAKRYDRQPTLRPATPHTITLQSLRNLRLPKRLRLVYFFARTRLAQRIIMAGTVVWIGILVYTDPAGLRNYLTVHVTEQSPLGGAVMPPIPVPVLSASNPHGPLSAVFPTGSSQLLENQSQRDSKEVIDSLSSRIWEESHPEDKSKERAAKIEDKAHTQVTWGAEDEETWRKLSFRHWPTLFSYYNITLAKKYISILPMIPVTLYLTPQEVSDARHPQEAQHSHPYLQREGKPDEAWARVEAKGAEKPTENQTPADVTLYKVAALGLASGIFLVLFFFLLYRLLCPKNYGQNGVSHGRRKKGDLPCDDYGYSPPETEIVPLVLRGHHMDIECLASDKMLLVSCCLAGQIRVWDAQSGDCLTIIPKPSLRRESSGVFEYQDNWEPTPECKYNPEESLENGYQLKRRTLHPPLFSDQPDLTSLIDTNFSEQPANEESGARQRLSCIKQESPPIGYDFSSLVQKVYEEHEVSSFGSFPLVLSPAPYGQCQLSSGRRSQTPAGCVDGSCARRKSSTEETTGYCNGSSSPAPSWTDSFESSVWSLGLQGNLIVVGRSNGNLEVWDAIEGSLRCSNCDGQSGITSLVFLNHRVVVARLNGSMDFYCLDSQKSSNQLQFRGAPNRSNVPSSPLYSTDDVIGCQRTHTVACAHRKPITALKAAAGRLVTGSQDHTVRIYRLEDACCLFTLQGHSGGITAIYIDETMVLASGGQDGAICLWDVLTGSRVSHMFGHRGDVTSLLCTASCVISSGLDDVISIWDRSTAIKLYSIQQDLGCGSSLGLISDNLLVTGGLGCVSFWDVGYGDLLQTVYLGKCEDSQPARHILVLDNSAIVCDFGSELSLVYVPSVLEKLD.

Residues 1 to 18 (MPLIDKLRERISRAFYSH) are Cytoplasmic-facing. Residues 19 to 39 (GLLCASYPIPIIILTALCILA) traverse the membrane as a helical segment. At 40 to 277 (SCYPLLKLPL…HIVHVHFKEE (238 aa)) the chain is on the lumenal side. Residues 46 to 282 (KLPLPGTGPV…HFKEEIGIAE (237 aa)) are loop-1. N-linked (GlcNAc...) asparagine glycans are attached at residues Asn242 and Asn261. The chain crosses the membrane as a helical span at residues 278–298 (IGIAELIPLVTTYIILFAYIY). An SSD domain is found at 282-440 (ELIPLVTTYI…MFFFTTVLSI (159 aa)). Topologically, residues 299–310 (FSTRKIDLVKSK) are cytoplasmic. Residues 311–331 (WGLALAAVVTVLSSLLMSVGL) form a helical membrane-spanning segment. Residues 332-342 (CTLFGLTPTLN) lie on the Lumenal side of the membrane. A helical membrane pass occupies residues 343-363 (GGEIFPYLVVVIGLENVLVLT). Residues 364–399 (KSVVSTPVDLEVKLRIAQGLRNESWFIMKNMATELG) lie on the Cytoplasmic side of the membrane. A helical transmembrane segment spans residues 400-420 (IILIGYFTLVPAIQEFCLFAV). Residue Val421 is a topological domain, lumenal. A helical membrane pass occupies residues 422–442 (GLVSDFFLQMFFFTTVLSIDI). Residues 443–512 (RRMELADLNK…FFARTRLAQR (70 aa)) are Cytoplasmic-facing. Residues 445-450 (MELADL) carry the ER export signal motif. Residues 513-533 (IIMAGTVVWIGILVYTDPAGL) traverse the membrane as a helical segment. The tract at residues 529–726 (DPAGLRNYLT…QTPADVTLYK (198 aa)) is loop-7. The Lumenal portion of the chain corresponds to 534–723 (RNYLTVHVTE…TENQTPADVT (190 aa)). Residues Asn583 and Asn651 are each glycosylated (N-linked (GlcNAc...) asparagine). The chain crosses the membrane as a helical span at residues 724–744 (LYKVAALGLASGIFLVLFFFL). Over 745 to 1311 (LYRLLCPKNY…YVPSVLEKLD (567 aa)) the chain is Cytoplasmic. Residues 747–1311 (RLLCPKNYGQ…YVPSVLEKLD (565 aa)) form an interaction with srebf region. WD repeat units lie at residues 790–827 (GHHM…CLTI), 997–1034 (SFES…LRCS), 1037–1076 (DGQS…NQLQ), 1109–1146 (AHRK…CLFT), 1149–1187 (GHSG…RVSH), 1190–1227 (GHRG…KLYS), and 1230–1267 (QDLG…LLQT).

Belongs to the WD repeat SCAP family. In terms of assembly, membrane region forms a homotetramer. Component of the SCAP-SREBP complex (composed of SCAP and srebf1/srebp1 or srebf2/srebp2). Forms a ternary complex with insig1 or insig2 through its transmembrane domains at high sterol concentrations. Interacts with the SEC23-SEC24 complex.

The protein localises to the endoplasmic reticulum membrane. It localises to the golgi apparatus membrane. Its subcellular location is the cytoplasmic vesicle. It is found in the COPII-coated vesicle membrane. Its function is as follows. Escort protein required for cholesterol as well as lipid homeostasis. Regulates export of the SCAP-SREBP complex from the endoplasmic reticulum to the Golgi upon low cholesterol, thereby regulating the processing of sterol regulatory element-binding proteins (SREBPs) SREBF1/SREBP1 and SREBF2/SREBP2. At high sterol concentrations, formation of a ternary complex with INSIG (INSIG1 or INSIG2) leads to mask the ER export signal in SCAP, promoting retention of the complex in the endoplasmic reticulum. Low sterol concentrations trigger release of INSIG, a conformational change in the SSD domain of SCAP, unmasking of the ER export signal, promoting recruitment into COPII-coated vesicles and transport of the SCAP-SREBP to the Golgi: in the Golgi, SREBPs are then processed, releasing the transcription factor fragment of SREBPs from the membrane, its import into the nucleus and up-regulation of LDLR, INSIG1 and the mevalonate pathway. Binds cholesterol via its SSD domain. In Xenopus laevis (African clawed frog), this protein is Sterol regulatory element-binding protein cleavage-activating protein.